The following is a 519-amino-acid chain: Glucoamylase GLA1 (519 aa).

The N-terminal stretch at 1–27 is a signal peptide; it reads MRFGVLISVFVAIVSALPLQEGPLNKR. N-linked (GlcNAc...) asparagine glycosylation is found at asparagine 115 and asparagine 127. Tryptophan 166 contacts substrate. A glycan (N-linked (GlcNAc...) asparagine) is linked at asparagine 205. Aspartate 234 functions as the Proton acceptor in the catalytic mechanism. Catalysis depends on glutamate 237, which acts as the Proton donor.

It belongs to the glycosyl hydrolase 15 family.

The catalysed reaction is Hydrolysis of terminal (1-&gt;4)-linked alpha-D-glucose residues successively from non-reducing ends of the chains with release of beta-D-glucose.. The sequence is that of Glucoamylase GLA1 (GLA1) from Saccharomycopsis fibuligera (Yeast).